The primary structure comprises 108 residues: Cytochrome bo(3) ubiquinol oxidase subunit 4 (108 aa).

Residues 1-16 lie on the Cytoplasmic side of the membrane; that stretch reads MNKYKKIKNNFDKEKK. Residues 17-37 form a helical membrane-spanning segment; the sequence is SYIVGFLFSLFLTIIPFFCTL. The Extracellular portion of the chain corresponds to 38–46; the sequence is NHLFSRKIN. A helical transmembrane segment spans residues 47-67; sequence FFVILLCALSQIIIHFIYFLH. Topologically, residues 68–77 are cytoplasmic; the sequence is LDFSKKNSWN. The helical transmembrane segment at 78-98 threads the bilayer; it reads IISLLFILIIVFIIVFGSIWI. Residues 99 to 108 lie on the Extracellular side of the membrane; sequence MYNLNHHVIL.

It belongs to the cytochrome c oxidase bacterial subunit 4 family. In terms of assembly, heterooctamer of two A chains, two B chains, two C chains and two D chains.

Its subcellular location is the cell membrane. Functionally, cytochrome bo(3) ubiquinol terminal oxidase is the component of the aerobic respiratory chain of E.coli that predominates when cells are grown at high aeration. Has proton pump activity across the membrane in addition to electron transfer, pumping 2 protons/electron. The polypeptide is Cytochrome bo(3) ubiquinol oxidase subunit 4 (cyoD) (Buchnera aphidicola subsp. Schizaphis graminum (strain Sg)).